A 477-amino-acid chain; its full sequence is Asparaginyl-tRNA synthetase (477 aa).

The N-terminal 14 residues, 1–14 (MLGVRCLLRSVRFC), are a transit peptide targeting the mitochondrion. Lys-353 carries the post-translational modification N6-acetyllysine.

The protein belongs to the class-II aminoacyl-tRNA synthetase family. Homodimer.

The protein localises to the mitochondrion matrix. The protein resides in the mitochondrion. The catalysed reaction is tRNA(Asn) + L-asparagine + ATP = L-asparaginyl-tRNA(Asn) + AMP + diphosphate + H(+). Mitochondrial aminoacyl-tRNA synthetase that catalyzes the specific attachment of the asparagine amino acid (aa) to the homologous transfer RNA (tRNA), further participating in protein synthesis. The reaction occurs in a two steps: asparagine is first activated by ATP to form Asn-AMP and then transferred to the acceptor end of tRNA(Asn). The sequence is that of Asparaginyl-tRNA synthetase from Homo sapiens (Human).